The following is a 326-amino-acid chain: MEITFLGTSSGVPTRNRNVSSIALRLPQRAELWLFDCGEGTQHQFLRSEVKISQLTRIFITHLHGDHIFGLMGLLASSGLAGSGQGIEIYGPEGLGDYLEACCRFSSTHLGKRLKVHTVRENGLIYEDKDFQVHCGLLKHRIPAYGYRVEEKQRPGRFNVEQAEALGIPFGPIYGQLKQGKTVTLEDGRRIRGQDLCEPPEPGRKFVYCTDTVFCEEAIALAQEADLLVHEATFAHQDAQLAFDRLHSTSTMAAQVALLANVKQLIMTHFSPRYAPGNPLQLENLLAEAQAIFPNTRLARDFLTVEIPRRTADPAIAMSTPQASPA.

Positions 62, 64, 66, 67, 140, 211, and 269 each coordinate Zn(2+). The active-site Proton acceptor is the Asp-66.

This sequence belongs to the RNase Z family. As to quaternary structure, homodimer. The cofactor is Zn(2+).

It catalyses the reaction Endonucleolytic cleavage of RNA, removing extra 3' nucleotides from tRNA precursor, generating 3' termini of tRNAs. A 3'-hydroxy group is left at the tRNA terminus and a 5'-phosphoryl group is left at the trailer molecule.. In terms of biological role, zinc phosphodiesterase, which displays some tRNA 3'-processing endonuclease activity. Probably involved in tRNA maturation, by removing a 3'-trailer from precursor tRNA. This Synechocystis sp. (strain ATCC 27184 / PCC 6803 / Kazusa) protein is Ribonuclease Z.